The following is a 400-amino-acid chain: Phosphoglycerate kinase (400 aa).

Substrate is bound by residues 23 to 25 (DLN), Arg38, 61 to 64 (HFGR), Arg120, and Arg153. ATP-binding positions include Lys203, Glu325, and 355-358 (GGDT).

This sequence belongs to the phosphoglycerate kinase family. Monomer.

Its subcellular location is the cytoplasm. The catalysed reaction is (2R)-3-phosphoglycerate + ATP = (2R)-3-phospho-glyceroyl phosphate + ADP. Its pathway is carbohydrate degradation; glycolysis; pyruvate from D-glyceraldehyde 3-phosphate: step 2/5. The sequence is that of Phosphoglycerate kinase from Rhizobium leguminosarum bv. trifolii (strain WSM2304).